The chain runs to 319 residues: Thioredoxin reductase (319 aa).

FAD contacts are provided by residues 11-14 (SGPA), 40-41 (VA), Gln45, Asn54, Val87, Cys145, Asp288, and 295-297 (RQA). A disulfide bridge links Cys142 with Cys145.

The protein belongs to the class-II pyridine nucleotide-disulfide oxidoreductase family. In terms of assembly, homodimer. It depends on FAD as a cofactor.

The protein resides in the cytoplasm. It carries out the reaction [thioredoxin]-dithiol + NADP(+) = [thioredoxin]-disulfide + NADPH + H(+). The chain is Thioredoxin reductase (TRR1) from Eremothecium gossypii (strain ATCC 10895 / CBS 109.51 / FGSC 9923 / NRRL Y-1056) (Yeast).